A 344-amino-acid chain; its full sequence is UDP-N-acetylglucosamine transporter UGNT1 (344 aa).

Positions 1-23 are disordered; it reads MRNNPVLPVSDPPLAGENDSDGK. 9 helical membrane passes run 41–61, 66–86, 92–112, 114–134, 167–187, 194–214, 226–246, 264–284, and 304–324; these read YAAL…KAAL, FPCV…FLYA, IISF…FVPV, TLFH…ASMA, YTRS…FAGA, FYGY…LATI, FGLM…WTFI, FMVV…CIFL, and FTVG…MNVI.

It belongs to the TPT transporter family. UGnT (TC 2.A.7.15) subfamily. In terms of tissue distribution, expressed in roots, leaves, stems, flowers and siliques.

It is found in the golgi apparatus membrane. Its function is as follows. Mediates the transport of UDP-N-acetylglucosamine (UDP-GlcNAc) across the Golgi apparatus membrane. Delivers an essential substrate for the maturation of N-glycans and the GlcNAc-containing glycosyl inositol phosphorylceramide (GIPC) class of sphingolipids in the Golgi apparatus. The chain is UDP-N-acetylglucosamine transporter UGNT1 from Arabidopsis thaliana (Mouse-ear cress).